A 154-amino-acid chain; its full sequence is Cold shock domain-containing protein C2 (154 aa).

Residue S19 is modified to Phosphoserine. Positions 38 to 62 (GGGIAPRDLPSPLPTKRTRTYSATA) are disordered. The region spanning 69-136 (VFKGVCKQFS…KFQAVEVVLT (68 aa)) is the CSD domain.

The protein localises to the nucleus. It localises to the cytoplasm. Functionally, RNA-binding factor which binds specifically to the very 3'-UTR ends of both histone H1 and H3.3 mRNAs, encompassing the polyadenylation signal. Might play a central role in the negative regulation of histone variant synthesis in the developing brain. This chain is Cold shock domain-containing protein C2 (Csdc2), found in Mus musculus (Mouse).